A 346-amino-acid chain; its full sequence is Methylthioribose-1-phosphate isomerase (346 aa).

Substrate contacts are provided by residues 44–46 (RGA), Arg87, and Gln194. Asp235 (proton donor) is an active-site residue. 245 to 246 (NK) contacts substrate.

It belongs to the eIF-2B alpha/beta/delta subunits family. MtnA subfamily.

The enzyme catalyses 5-(methylsulfanyl)-alpha-D-ribose 1-phosphate = 5-(methylsulfanyl)-D-ribulose 1-phosphate. The protein operates within amino-acid biosynthesis; L-methionine biosynthesis via salvage pathway; L-methionine from S-methyl-5-thio-alpha-D-ribose 1-phosphate: step 1/6. Functionally, catalyzes the interconversion of methylthioribose-1-phosphate (MTR-1-P) into methylthioribulose-1-phosphate (MTRu-1-P). This is Methylthioribose-1-phosphate isomerase from Desulforamulus reducens (strain ATCC BAA-1160 / DSM 100696 / MI-1) (Desulfotomaculum reducens).